Consider the following 82-residue polypeptide: Mu-conotoxin GVIIJ (82 aa).

The first 22 residues, 1–22 (MKLTCVVIVAALLLTACQLITA), serve as a signal peptide directing secretion. The propeptide occupies 23-47 (LDCGGTQKHRALRSTIKLSLLRQHR). Residue W49 is modified to 6'-bromotryptophan. Disulfide bonds link C50/C65, C57/C69, and C64/C76. At P53 the chain carries 4-hydroxyproline. C71 lines the a protein pocket.

The protein belongs to the conotoxin O1 superfamily. Post-translationally, cys-71 is a key residue that tethers to the channel by covalent attachment, leading to nearly irreversible inhibition (k(off) very low). In order to determine the solution structure without dimerization, this residue was mutated to Cys. As to expression, expressed by the venom duct.

It localises to the secreted. In terms of biological role, mu-conotoxins block voltage-gated sodium channels (Nav). This toxin (GVIIJ(SSG)) blocks Nav1.1/SCN1A (Kd=11 nM), Nav1.2/SCN2A (Kd=11 nM), Nav1.3/SCN3A (Kd=15 nM), Nav1.4/SCN4A (Kd=4.7 nM), Nav1.6/SCN8A (Kd=360 nM) and Nav1.7/SCN9A (Kd=41 nM). It binds the channel at the newly described site 8, which is composed by two surfaces whose one contains a non-disulfide-bonded cysteine (which is free to covalently bind the toxin Cys-71). It is noteworthy that coexpression of subunits beta-2 or beta-4 (but not beta-1 or beta-3) protects rNav1.1-1.7 against block by the toxin, since these subunits (thanks to their extracellular domain) covalently bind to the key cysteine of the channel, thus preventing the covalent binding of the toxin. In Conus geographus (Geography cone), this protein is Mu-conotoxin GVIIJ.